Reading from the N-terminus, the 405-residue chain is Transposase from transposon Tn916 (405 aa).

Residues 79–163 form the Core-binding (CB) domain; the sequence is GKKMTLCQLY…SLKASFYIAI (85 aa). In terms of domain architecture, Tyr recombinase spans 186–392; it reads VPKTVLTEEQ…TFDSAMAEMK (207 aa). Active-site residues include Arg225, Lys264, His343, Arg346, and His369. Catalysis depends on Tyr379, which acts as the O-(3'-phospho-DNA)-tyrosine intermediate.

This sequence belongs to the 'phage' integrase family.

This chain is Transposase from transposon Tn916 (Int-Tn), found in Enterococcus faecalis (Streptococcus faecalis).